The sequence spans 395 residues: Inner membrane protein YjgN (395 aa).

The Cytoplasmic portion of the chain corresponds to methionine 1 to tyrosine 24. A helical transmembrane segment spans residues phenylalanine 25–tryptophan 45. Residues alanine 46–glycine 71 are Periplasmic-facing. Residues glycine 72–isoleucine 92 form a helical membrane-spanning segment. Over glutamate 93–glycine 95 the chain is Cytoplasmic. Residues histidine 96–valine 116 form a helical membrane-spanning segment. Residues lysine 117–methionine 146 are Periplasmic-facing. A helical transmembrane segment spans residues phenylalanine 147–valine 167. A topological domain (cytoplasmic) is located at residue threonine 168. Residues isoleucine 169–isoleucine 189 traverse the membrane as a helical segment. Topologically, residues glycine 190–valine 229 are periplasmic. The chain crosses the membrane as a helical span at residues leucine 230–phenylalanine 250. At threonine 251–glutamine 275 the chain is on the cytoplasmic side. Residues isoleucine 276–valine 296 form a helical membrane-spanning segment. Residues alanine 297 to arginine 327 lie on the Periplasmic side of the membrane. A helical membrane pass occupies residues leucine 328–isoleucine 348. The Cytoplasmic portion of the chain corresponds to tryptophan 349–isoleucine 395.

The protein resides in the cell inner membrane. The chain is Inner membrane protein YjgN (yjgN) from Salmonella typhimurium (strain LT2 / SGSC1412 / ATCC 700720).